The following is a 154-amino-acid chain: uncharacterized protein (154 aa).

The segment at 1–37 (MDNLKEKPLSYNINNNNLNNNNNNNNNNNNNNNNINN) is disordered. Residues 12–37 (NINNNNLNNNNNNNNNNNNNNNNINN) are compositionally biased toward low complexity. A glycan (N-linked (GlcNAc...) asparagine) is linked at Asn-82. The chain crosses the membrane as a helical span at residues 116-136 (IIITTIVVLLMIAVSLGLILA). Asn-149 carries N-linked (GlcNAc...) asparagine glycosylation.

The protein resides in the membrane. This is an uncharacterized protein from Dictyostelium discoideum (Social amoeba).